Reading from the N-terminus, the 734-residue chain is Photosystem I P700 chlorophyll a apoprotein A2 (734 aa).

8 consecutive transmembrane segments (helical) span residues 46-69, 135-158, 175-199, 273-291, 330-353, 369-395, 417-439, and 517-535; these read IFASHFGQLAIIFLWTSGNLFHVA, LYTGALFLLFLSTLSLIGGWLHLQ, LNHHLSGLFGVSSLAWTGHLVHVAI, IAHHHLAIAFIFLIAGHMY, IHFQLGLALASLGVITSLVAQHMY, AALYTHHQYIAGFIMTGAFAHGAIFFI, AIISHLSWASLFLGFHTLGLYVH, and FLVHHAIALGLHTTTLILV. [4Fe-4S] cluster contacts are provided by Cys-559 and Cys-568. 2 helical membrane passes run 575 to 596 and 643 to 665; these read AFYLAVFWMLNTIGWVTFYWHW and LSVWAWMFLFGHLVWATGFMFLI. His-654, Met-662, and Tyr-670 together coordinate chlorophyll a. Position 671 (Trp-671) interacts with phylloquinone. Residues 707–727 form a helical membrane-spanning segment; that stretch reads LVGLAHFSVGYIFTYAAFLIA.

This sequence belongs to the PsaA/PsaB family. The PsaA/B heterodimer binds the P700 chlorophyll special pair and subsequent electron acceptors. PSI consists of a core antenna complex that captures photons, and an electron transfer chain that converts photonic excitation into a charge separation. The eukaryotic PSI reaction center is composed of at least 11 subunits. Requires P700 is a chlorophyll a/chlorophyll a' dimer, A0 is one or more chlorophyll a, A1 is one or both phylloquinones and FX is a shared 4Fe-4S iron-sulfur center. as cofactor.

The protein resides in the plastid. Its subcellular location is the chloroplast thylakoid membrane. The catalysed reaction is reduced [plastocyanin] + hnu + oxidized [2Fe-2S]-[ferredoxin] = oxidized [plastocyanin] + reduced [2Fe-2S]-[ferredoxin]. In terms of biological role, psaA and PsaB bind P700, the primary electron donor of photosystem I (PSI), as well as the electron acceptors A0, A1 and FX. PSI is a plastocyanin-ferredoxin oxidoreductase, converting photonic excitation into a charge separation, which transfers an electron from the donor P700 chlorophyll pair to the spectroscopically characterized acceptors A0, A1, FX, FA and FB in turn. Oxidized P700 is reduced on the lumenal side of the thylakoid membrane by plastocyanin. This is Photosystem I P700 chlorophyll a apoprotein A2 from Saccharum hybrid (Sugarcane).